Reading from the N-terminus, the 103-residue chain is Large ribosomal subunit protein eL14 (103 aa).

The protein belongs to the eukaryotic ribosomal protein eL14 family.

The polypeptide is Large ribosomal subunit protein eL14 (Pyrobaculum islandicum (strain DSM 4184 / JCM 9189 / GEO3)).